The following is a 365-amino-acid chain: uncharacterized protein (365 aa).

This sequence belongs to the NAD(P)-dependent epimerase/dehydratase family.

It localises to the cytoplasm. The protein resides in the nucleus. This is an uncharacterized protein from Schizosaccharomyces pombe (strain 972 / ATCC 24843) (Fission yeast).